The primary structure comprises 254 residues: Small ribosomal subunit protein uS2 (254 aa).

The protein belongs to the universal ribosomal protein uS2 family.

The polypeptide is Small ribosomal subunit protein uS2 (Borrelia recurrentis (strain A1)).